Consider the following 447-residue polypeptide: RNA-binding protein 208 (447 aa).

RRM domains lie at 73–147 and 158–236; these read RSVY…WAYA and FHIF…WATK. The span at 254-269 shows a compositional bias: polar residues; it reads TNGSSSNPGMEASQDT. 2 disordered regions span residues 254 to 279 and 353 to 372; these read TNGSSSNPGMEASQDTGSKENPENNP and WGNKPTPPGTSSKPLPPPLP. The region spanning 282–356 is the RRM 3 domain; the sequence is TTVYVGNLGH…KPIKCSWGNK (75 aa).

In terms of assembly, interacts with RBP-P.

In terms of biological role, RNA-binding protein. This Oryza sativa subsp. japonica (Rice) protein is RNA-binding protein 208.